The chain runs to 274 residues: Mitochondrial outer membrane protein porin 3 (274 aa).

Ser76 is modified (phosphoserine).

It belongs to the eukaryotic mitochondrial porin (TC 1.B.8.1) family. As to quaternary structure, interacts with KIN14F/KP1. Interacts with FBA6 and GAPC1. In terms of tissue distribution, expressed in leaf tips, anthers and stigma.

It is found in the cell membrane. The protein resides in the mitochondrion outer membrane. In terms of biological role, forms a channel through the mitochondrial outer membrane that allows diffusion of small hydrophilic molecules. The channel adopts an open conformation at low or zero membrane potential and a closed conformation at potentials above 30-40 mV. The open state has a weak anion selectivity whereas the closed state is cation-selective. The sequence is that of Mitochondrial outer membrane protein porin 3 (VDAC3) from Arabidopsis thaliana (Mouse-ear cress).